A 236-amino-acid chain; its full sequence is 2,3,4,5-tetrahydropyridine-2,6-dicarboxylate N-acetyltransferase (236 aa).

Belongs to the transferase hexapeptide repeat family. DapH subfamily.

It catalyses the reaction (S)-2,3,4,5-tetrahydrodipicolinate + acetyl-CoA + H2O = L-2-acetamido-6-oxoheptanedioate + CoA. It participates in amino-acid biosynthesis; L-lysine biosynthesis via DAP pathway; LL-2,6-diaminopimelate from (S)-tetrahydrodipicolinate (acetylase route): step 1/3. Its function is as follows. Catalyzes the transfer of an acetyl group from acetyl-CoA to tetrahydrodipicolinate. The polypeptide is 2,3,4,5-tetrahydropyridine-2,6-dicarboxylate N-acetyltransferase (Clostridium botulinum (strain Kyoto / Type A2)).